The chain runs to 180 residues: Cell wall / vacuolar inhibitor of fructosidase 2 (180 aa).

An N-terminal signal peptide occupies residues 1–23 (MASSLIFLLLVTLTFSASTLISA). An N-linked (GlcNAc...) asparagine glycan is attached at N26. A disulfide bridge connects residues C35 and C44. 2 N-linked (GlcNAc...) asparagine glycosylation sites follow: N73 and N84. An intrachain disulfide couples C101 to C141.

It belongs to the PMEI family. As to expression, mostly expressed at low levels in seedlings, stems, leaves and flowers (in all organs), and, to a lower extent, in roots and siliques.

The protein resides in the vacuole. Inhibits fructosidases from both cell wall (cell wall invertase CWI) and vacuoles (vacuolar invertase VI). The chain is Cell wall / vacuolar inhibitor of fructosidase 2 (C/VIF2) from Arabidopsis thaliana (Mouse-ear cress).